Here is a 339-residue protein sequence, read N- to C-terminus: Phenylalanine--tRNA ligase alpha subunit (339 aa).

Glu-254 provides a ligand contact to Mg(2+).

Belongs to the class-II aminoacyl-tRNA synthetase family. Phe-tRNA synthetase alpha subunit type 1 subfamily. In terms of assembly, tetramer of two alpha and two beta subunits. Mg(2+) is required as a cofactor.

It is found in the cytoplasm. The enzyme catalyses tRNA(Phe) + L-phenylalanine + ATP = L-phenylalanyl-tRNA(Phe) + AMP + diphosphate + H(+). The chain is Phenylalanine--tRNA ligase alpha subunit from Clostridium botulinum (strain Alaska E43 / Type E3).